Consider the following 1366-residue polypeptide: DNA-directed RNA polymerase subunit beta (1366 aa).

Belongs to the RNA polymerase beta chain family. As to quaternary structure, the RNAP catalytic core consists of 2 alpha, 1 beta, 1 beta' and 1 omega subunit. When a sigma factor is associated with the core the holoenzyme is formed, which can initiate transcription.

The enzyme catalyses RNA(n) + a ribonucleoside 5'-triphosphate = RNA(n+1) + diphosphate. Functionally, DNA-dependent RNA polymerase catalyzes the transcription of DNA into RNA using the four ribonucleoside triphosphates as substrates. In Polynucleobacter asymbioticus (strain DSM 18221 / CIP 109841 / QLW-P1DMWA-1) (Polynucleobacter necessarius subsp. asymbioticus), this protein is DNA-directed RNA polymerase subunit beta.